Consider the following 423-residue polypeptide: Diels-Alderase pyiF (423 aa).

The first 17 residues, 1–17 (MLPSFIFVYSLLATATA), serve as a signal peptide directing secretion. 3 N-linked (GlcNAc...) asparagine glycosylation sites follow: Asn60, Asn92, and Asn219.

Belongs to the Diels-Alderase family.

The protein operates within mycotoxin biosynthesis. Functionally, diels-Alderase; part of the gene cluster that mediates the biosynthesis of the mycotoxin pyrichalasin H, a tyrosine-derived cytochalasan that inhibits the growth of rice seedlings, but also inhibits lymphocyte capping and actin polymerization and alters cell morphology. Pyrichalasin H is indicated as the responsible agent for the genus-specific pathogenicity of M.grisea toward crabgrass. The first step in the pathway is catalyzed by the O-methyltransferase pyiA which methylates free tyrosine to generate the precursor O-methyltyrosine. The hybrid PKS-NRPS pyiS, assisted by the enoyl reductase pyiC, are responsible for fusion of the O-methyltyrosine precursor and the polyketide backbone. The polyketide synthase module (PKS) of pyiS is responsible for the synthesis of the polyketide backbone and the downstream nonribosomal peptide synthetase (NRPS) amidates the carboxyl end of the polyketide with the O-methyltyrosine precursor. As the NRPS A-domain demonstrates substrate tolerance, pyiS can also use phenylalanine, tyrosine and even para-chlorophenylalanine as amino acid precursor, which leads to the production of novel cytochalasans, including halogenated cytochalasans. Because pyiS lacks a designated enoylreductase (ER) domain, the required activity is provided the enoyl reductase pyiC. Reduction by the hydrolyase pyiE leads to 1,5-dihydropyrrolone, which is substrate for dehydration and intra-molecular Diels-Alder cyclization by the Diels-Alderase pyiF to yield the required isoindolone-fused macrocycle. The tailoring cytochrome P450 monooxygenases piyD and piyG catalyze the hydroxylation at C-18 and C-7, respectivily, whereas the short-chain dehydrogenase/reductase pyiH reduces the carbonyl at C-21 in preparation for the transfer of an acetyl group by the acetyltransferase pyiB. These 3 reactions whose order is not clear yet, lead to the production of O-methylpyrichalasin J, a deacetylated pyrichalasin H. Finally, pyiB to converts O-methylpyrichalasin J into the final product pyrichalasin H via acetylation of C-21. This is Diels-Alderase pyiF from Pyricularia grisea (Crabgrass-specific blast fungus).